Reading from the N-terminus, the 490-residue chain is Betaine aldehyde dehydrogenase (490 aa).

Residue D93 participates in K(+) binding. NAD(+) is bound at residue 150–152 (GAW). The active-site Charge relay system is K162. Position 176–179 (176–179 (KPSE)) interacts with NAD(+). Residue V180 coordinates K(+). 230–233 (GIAS) lines the NAD(+) pocket. L246 is a binding site for K(+). The Proton acceptor role is filled by E252. Positions 254, 286, and 387 each coordinate NAD(+). The active-site Nucleophile is C286. C286 is subject to Cysteine sulfenic acid (-SOH). Residues K457 and G460 each contribute to the K(+) site. The active-site Charge relay system is E464.

It belongs to the aldehyde dehydrogenase family. Dimer of dimers. K(+) is required as a cofactor.

The enzyme catalyses betaine aldehyde + NAD(+) + H2O = glycine betaine + NADH + 2 H(+). It functions in the pathway amine and polyamine biosynthesis; betaine biosynthesis via choline pathway; betaine from betaine aldehyde: step 1/1. Involved in the biosynthesis of the osmoprotectant glycine betaine. Catalyzes the irreversible oxidation of betaine aldehyde to the corresponding acid. This Yersinia pestis protein is Betaine aldehyde dehydrogenase.